The primary structure comprises 533 residues: ATP synthase F(1) complex catalytic subunit beta, mitochondrial (533 aa).

The transit peptide at 1 to 53 (MLGLAGRCSAAAASAARPALRRAAGPSHGFLPLLLSRGAGPAAAVGARRDHAA) directs the protein to the mitochondrion. 6 residues coordinate ADP: glycine 214, valine 215, glycine 216, lysine 217, threonine 218, and valine 219. ATP is bound at residue glycine 214. Residues glycine 214, valine 215, glycine 216, lysine 217, and threonine 218 each coordinate phosphate. Glycine 216, lysine 217, threonine 218, and valine 219 together coordinate ATP. Threonine 218 lines the Mg(2+) pocket. Glutamate 243 is a Mg(2+) binding site. Residue arginine 244 coordinates ATP.

In terms of assembly, homotrimer. Component of the ATP synthase complex composed at least of ATP5F1A/subunit alpha, ATP5F1B/subunit beta, ATP5MC1/subunit c (homooctomer), MT-ATP6/subunit a, MT-ATP8/subunit 8, ATP5ME/subunit e, ATP5MF/subunit f, ATP5MG/subunit g, ATP5MK/subunit k, ATP5MJ/subunit j, ATP5F1C/subunit gamma, ATP5F1D/subunit delta, ATP5F1E/subunit epsilon, ATP5PF/subunit F6, ATP5PB/subunit b, ATP5PD/subunit d, ATP5PO/subunit OSCP. ATP synthase complex consists of a soluble F(1) head domain (subunits alpha(3) and beta(3)) - the catalytic core - and a membrane F(0) domain - the membrane proton channel (subunits c, a, 8, e, f, g, k and j). These two domains are linked by a central stalk (subunits gamma, delta, and epsilon) rotating inside the F1 region and a stationary peripheral stalk (subunits F6, b, d, and OSCP).

The protein resides in the mitochondrion inner membrane. It catalyses the reaction ATP + H2O + 4 H(+)(in) = ADP + phosphate + 5 H(+)(out). In terms of biological role, catalytic subunit beta, of the mitochondrial membrane ATP synthase complex (F(1)F(0) ATP synthase or Complex V) that produces ATP from ADP in the presence of a proton gradient across the membrane which is generated by electron transport complexes of the respiratory chain. ATP synthase complex consist of a soluble F(1) head domain - the catalytic core - and a membrane F(1) domain - the membrane proton channel. These two domains are linked by a central stalk rotating inside the F(1) region and a stationary peripheral stalk. During catalysis, ATP synthesis in the catalytic domain of F(1) is coupled via a rotary mechanism of the central stalk subunits to proton translocation. In vivo, can only synthesize ATP although its ATP hydrolase activity can be activated artificially in vitro. With the subunit alpha (ATP5F1A), forms the catalytic core in the F(1) domain. The polypeptide is ATP synthase F(1) complex catalytic subunit beta, mitochondrial (Gallus gallus (Chicken)).